Reading from the N-terminus, the 228-residue chain is MSKSHLLKYLLISPNLPVGGFCYSEGMESFLHNKNLTDSNSVKELIISELEIGQIRLDARLLLDFFDIFNQINDRKNLKGNLQKLMSLDKWILSSKDSLEMREQQIQMAKSLFDLTKEFGFEYLYENDKKSSWSLAWSWACYCFEITKLEMVENFFYAWSANQLSAALRIIPIGSTKAQLIQRDLLAIISKVSKEIMDKEIDDLYFGNVGLAMAQQNHNDLYTKLFRN.

The protein belongs to the UreF family. UreD, UreF and UreG form a complex that acts as a GTP-hydrolysis-dependent molecular chaperone, activating the urease apoprotein by helping to assemble the nickel containing metallocenter of UreC. The UreE protein probably delivers the nickel.

Its subcellular location is the cytoplasm. In terms of biological role, required for maturation of urease via the functional incorporation of the urease nickel metallocenter. The protein is Urease accessory protein UreF of Prochlorococcus marinus (strain MIT 9301).